A 185-amino-acid polypeptide reads, in one-letter code: Peptidyl-tRNA hydrolase (185 aa).

A tRNA-binding site is contributed by Tyr-14. The Proton acceptor role is filled by His-19. Residues Tyr-64, Asn-66, and Asn-112 each contribute to the tRNA site.

Belongs to the PTH family. Monomer.

It localises to the cytoplasm. It carries out the reaction an N-acyl-L-alpha-aminoacyl-tRNA + H2O = an N-acyl-L-amino acid + a tRNA + H(+). In terms of biological role, hydrolyzes ribosome-free peptidyl-tRNAs (with 1 or more amino acids incorporated), which drop off the ribosome during protein synthesis, or as a result of ribosome stalling. Functionally, catalyzes the release of premature peptidyl moieties from peptidyl-tRNA molecules trapped in stalled 50S ribosomal subunits, and thus maintains levels of free tRNAs and 50S ribosomes. This Ligilactobacillus salivarius (strain UCC118) (Lactobacillus salivarius) protein is Peptidyl-tRNA hydrolase.